Consider the following 786-residue polypeptide: Endonuclease MutS2 (786 aa).

Residue glycine 333–threonine 340 participates in ATP binding. Residues leucine 711 to lysine 786 enclose the Smr domain.

Belongs to the DNA mismatch repair MutS family. MutS2 subfamily. Homodimer. Binds to stalled ribosomes, contacting rRNA.

Endonuclease that is involved in the suppression of homologous recombination and thus may have a key role in the control of bacterial genetic diversity. In terms of biological role, acts as a ribosome collision sensor, splitting the ribosome into its 2 subunits. Detects stalled/collided 70S ribosomes which it binds and splits by an ATP-hydrolysis driven conformational change. Acts upstream of the ribosome quality control system (RQC), a ribosome-associated complex that mediates the extraction of incompletely synthesized nascent chains from stalled ribosomes and their subsequent degradation. Probably generates substrates for RQC. This Lacticaseibacillus paracasei (strain ATCC 334 / BCRC 17002 / CCUG 31169 / CIP 107868 / KCTC 3260 / NRRL B-441) (Lactobacillus paracasei) protein is Endonuclease MutS2.